The primary structure comprises 378 residues: Queuine tRNA-ribosyltransferase (378 aa).

Residue aspartate 91 is the Proton acceptor of the active site. Substrate is bound by residues 91-95 (DSGGF), aspartate 145, glutamine 189, and glycine 216. The RNA binding stretch occupies residues 247 to 253 (GVGKPED). Catalysis depends on aspartate 266, which acts as the Nucleophile. An RNA binding; important for wobble base 34 recognition region spans residues 271-275 (TRNAR). The Zn(2+) site is built by cysteine 304, cysteine 306, cysteine 309, and histidine 335.

The protein belongs to the queuine tRNA-ribosyltransferase family. As to quaternary structure, homodimer. Within each dimer, one monomer is responsible for RNA recognition and catalysis, while the other monomer binds to the replacement base PreQ1. It depends on Zn(2+) as a cofactor.

It carries out the reaction 7-aminomethyl-7-carbaguanine + guanosine(34) in tRNA = 7-aminomethyl-7-carbaguanosine(34) in tRNA + guanine. Its pathway is tRNA modification; tRNA-queuosine biosynthesis. In terms of biological role, catalyzes the base-exchange of a guanine (G) residue with the queuine precursor 7-aminomethyl-7-deazaguanine (PreQ1) at position 34 (anticodon wobble position) in tRNAs with GU(N) anticodons (tRNA-Asp, -Asn, -His and -Tyr). Catalysis occurs through a double-displacement mechanism. The nucleophile active site attacks the C1' of nucleotide 34 to detach the guanine base from the RNA, forming a covalent enzyme-RNA intermediate. The proton acceptor active site deprotonates the incoming PreQ1, allowing a nucleophilic attack on the C1' of the ribose to form the product. After dissociation, two additional enzymatic reactions on the tRNA convert PreQ1 to queuine (Q), resulting in the hypermodified nucleoside queuosine (7-(((4,5-cis-dihydroxy-2-cyclopenten-1-yl)amino)methyl)-7-deazaguanosine). The sequence is that of Queuine tRNA-ribosyltransferase from Vibrio atlanticus (strain LGP32) (Vibrio splendidus (strain Mel32)).